The sequence spans 243 residues: MQLAYFHVAADVPQGAEPDAAVVIDVLRATTTIAWALNNGAEAVETFADLDQLRQSAAQWPESSRLMLGERGGQRIEGFDLGNSPVAVVPEQVAGKRLFMSTTNGTRSLQRVRGVQRLFTLALPNRRAVADHLLMDPPEQLWIVGSGWEGAYSLEDSLAAGALADLLLNAAADEACVVNDELTAALALWQQWKHDPEACLRQASHGQRLIGLGDHDADFRCCAELDRLSVVPVQVKPGVLCAS.

It belongs to the ComB family. Requires Mg(2+) as cofactor.

It catalyses the reaction (2R)-O-phospho-3-sulfolactate + H2O = (2R)-3-sulfolactate + phosphate. This chain is Probable 2-phosphosulfolactate phosphatase, found in Prochlorococcus marinus (strain MIT 9303).